Here is a 398-residue protein sequence, read N- to C-terminus: tRNA-specific 2-thiouridylase MnmA (398 aa).

ATP contacts are provided by residues A19–S26 and L45. C113 serves as the catalytic Nucleophile. Cysteines 113 and 210 form a disulfide. An ATP-binding site is contributed by G137. An interaction with tRNA region spans residues R160–Q162. C210 acts as the Cysteine persulfide intermediate in catalysis.

This sequence belongs to the MnmA/TRMU family.

The protein resides in the cytoplasm. The catalysed reaction is S-sulfanyl-L-cysteinyl-[protein] + uridine(34) in tRNA + AH2 + ATP = 2-thiouridine(34) in tRNA + L-cysteinyl-[protein] + A + AMP + diphosphate + H(+). In terms of biological role, catalyzes the 2-thiolation of uridine at the wobble position (U34) of tRNA, leading to the formation of s(2)U34. This is tRNA-specific 2-thiouridylase MnmA from Rhodopseudomonas palustris (strain HaA2).